The primary structure comprises 880 residues: Alanine--tRNA ligase (880 aa).

Residues His566, His570, Cys668, and His672 each contribute to the Zn(2+) site.

The protein belongs to the class-II aminoacyl-tRNA synthetase family. The cofactor is Zn(2+).

The protein resides in the cytoplasm. The catalysed reaction is tRNA(Ala) + L-alanine + ATP = L-alanyl-tRNA(Ala) + AMP + diphosphate. Catalyzes the attachment of alanine to tRNA(Ala) in a two-step reaction: alanine is first activated by ATP to form Ala-AMP and then transferred to the acceptor end of tRNA(Ala). Also edits incorrectly charged Ser-tRNA(Ala) and Gly-tRNA(Ala) via its editing domain. The sequence is that of Alanine--tRNA ligase from Parafrankia sp. (strain EAN1pec).